A 794-amino-acid chain; its full sequence is Copper-exporting P-type ATPase (794 aa).

2 consecutive HMA domains span residues 5 to 70 (KKTT…YGVL) and 72 to 138 (ETAE…YDAQ). Cu(+) contacts are provided by C16, C19, C83, and C86. The next 6 helical transmembrane spans lie at 162–182 (IISA…LFGI), 187–207 (IFMN…IIGW), 224–244 (MDVL…YEMV), 250–270 (ANVM…LILF), 411–431 (YFVP…IAFV), and 438–458 (PALV…LGLA). D495 acts as the 4-aspartylphosphate intermediate in catalysis. Residues D689 and D693 each coordinate Mg(2+). 2 consecutive transmembrane segments (helical) span residues 747–766 (LFWA…LGLL) and 770–789 (IAGA…ALRL).

Belongs to the cation transport ATPase (P-type) (TC 3.A.3) family. Type IB subfamily.

It localises to the cell membrane. It catalyses the reaction Cu(+)(in) + ATP + H2O = Cu(+)(out) + ADP + phosphate + H(+). Functionally, involved in copper export. This chain is Copper-exporting P-type ATPase (copA), found in Staphylococcus saprophyticus subsp. saprophyticus (strain ATCC 15305 / DSM 20229 / NCIMB 8711 / NCTC 7292 / S-41).